The following is a 184-amino-acid chain: MSRVGNKAIEVPNAVKVDIKDRNFISVEGPKGKLEYQFNHRLTITNENKVITVKRPNDEIFMKKIHGTTRALLSNMVEGVSKGFQKTLKIVGLAYRAQIKDKQLILSLGFSHPVSVAIPDNLEVVVNQNTEIVIKGIDKQLVGEFAAKNVKLRKPEPYKGKGIRYVGQYVRQKAGKSAKKTRKD.

This sequence belongs to the universal ribosomal protein uL6 family. As to quaternary structure, part of the 50S ribosomal subunit.

Its function is as follows. This protein binds to the 23S rRNA, and is important in its secondary structure. It is located near the subunit interface in the base of the L7/L12 stalk, and near the tRNA binding site of the peptidyltransferase center. This is Large ribosomal subunit protein uL6 from Onion yellows phytoplasma (strain OY-M).